Here is a 200-residue protein sequence, read N- to C-terminus: Probable molybdenum cofactor guanylyltransferase (200 aa).

GTP is bound by residues 9 to 11 (LAG), Lys-21, Asp-69, and Asp-100. Mg(2+) is bound at residue Asp-100.

The protein belongs to the MobA family. The cofactor is Mg(2+).

It localises to the cytoplasm. It catalyses the reaction Mo-molybdopterin + GTP + H(+) = Mo-molybdopterin guanine dinucleotide + diphosphate. In terms of biological role, transfers a GMP moiety from GTP to Mo-molybdopterin (Mo-MPT) cofactor (Moco or molybdenum cofactor) to form Mo-molybdopterin guanine dinucleotide (Mo-MGD) cofactor. This is Probable molybdenum cofactor guanylyltransferase from Bacillus cereus (strain B4264).